The chain runs to 415 residues: F-box/kelch-repeat protein At2g29600 (415 aa).

The tract at residues M1 to P58 is disordered. A compositionally biased stretch (basic and acidic residues) spans Q19–D45. The 48-residue stretch at Q56–L103 folds into the F-box domain. Kelch repeat units lie at residues K161–G208, I210–H254, K260–P309, and H311–I355.

The sequence is that of F-box/kelch-repeat protein At2g29600 from Arabidopsis thaliana (Mouse-ear cress).